The sequence spans 333 residues: Eukaryotic translation initiation factor 2 subunit 2 (333 aa).

3 disordered regions span residues 1-87 (MSGD…KSKK), 98-117 (IKDLKIESDVQEPAEPEEDL), and 141-165 (EKDEALEDEDSKKDDGISFSNQTGP). Position 2 is an N-acetylserine (S2). A phosphoserine mark is found at S2 and S13. The span at 13-22 (SKKKKKKKKP) shows a compositional bias: basic residues. At T36 the chain carries Phosphothreonine. The span at 40–51 (ETKEVEPEPTED) shows a compositional bias: basic and acidic residues. S67 is subject to Phosphoserine. K102 participates in a covalent cross-link: Glycyl lysine isopeptide (Lys-Gly) (interchain with G-Cter in SUMO2). S105 is subject to Phosphoserine. The span at 106–117 (DVQEPAEPEEDL) shows a compositional bias: acidic residues. 2 positions are modified to phosphoserine: S158 and S218. 2 positions are modified to N6-acetyllysine: K265 and K293. A C4-type zinc finger spans residues 281–305 (CHTCRSPDTILQKDTRLYFLQCETC).

This sequence belongs to the eIF-2-beta/eIF-5 family. As to quaternary structure, eukaryotic translation initiation factor 2 eIF2 is a heterotrimeric complex composed of an alpha (EIF2S1), a beta (EIF2S2) and a gamma (EIF2S3) chain. eIF2 is member of the 43S pre-initiation complex (43S PIC). eIF2 forms a complex with at least CELF1/CUGBP1, CALR, CALR3, EIF2S1, EIF2S2, HSP90B1 and HSPA5. Interacts with BZW2/5MP1. Interacts with EIF5.

The protein resides in the cytoplasm. It localises to the cytosol. Component of the eIF2 complex that functions in the early steps of protein synthesis by forming a ternary complex with GTP and initiator tRNA. This complex binds to a 40S ribosomal subunit, followed by mRNA binding to form a 43S pre-initiation complex (43S PIC). Junction of the 60S ribosomal subunit to form the 80S initiation complex is preceded by hydrolysis of the GTP bound to eIF2 and release of an eIF2-GDP binary complex. In order for eIF2 to recycle and catalyze another round of initiation, the GDP bound to eIF2 must exchange with GTP by way of a reaction catalyzed by eIF2B. The sequence is that of Eukaryotic translation initiation factor 2 subunit 2 (EIF2S2) from Bos taurus (Bovine).